Reading from the N-terminus, the 137-residue chain is Basic phospholipase A2 homolog W6D49 (137 aa).

The N-terminal stretch at 1 to 16 (MRTLWILAVLLVSVDG) is a signal peptide. Intrachain disulfides connect Cys-42–Cys-131, Cys-44–Cys-60, Cys-59–Cys-111, Cys-65–Cys-137, Cys-66–Cys-104, Cys-73–Cys-97, and Cys-91–Cys-102. The tract at residues 121 to 133 (KKQQFNTGIFCSK) is important for membrane-damaging activities in eukaryotes and bacteria; heparin-binding.

As to quaternary structure, monomer. As to expression, expressed by the venom gland.

It localises to the secreted. With respect to regulation, heparin reduces its edema-inducing activity. Its function is as follows. Snake venom phospholipase A2 homolog that lacks enzymatic activity. Shows myotoxin activities and displays edema-inducing activities. A model of myotoxic mechanism has been proposed: an apo Lys49-PLA2 is activated by the entrance of a hydrophobic molecule (e.g. fatty acid) at the hydrophobic channel of the protein leading to a reorientation of a monomer. This reorientation causes a transition between 'inactive' to 'active' states, causing alignment of C-terminal and membrane-docking sites (MDoS) side-by-side and putting the membrane-disruption sites (MDiS) in the same plane, exposed to solvent and in a symmetric position for both monomers. The MDoS region stabilizes the toxin on membrane by the interaction of charged residues with phospholipid head groups. Subsequently, the MDiS region destabilizes the membrane with penetration of hydrophobic residues. This insertion causes a disorganization of the membrane, allowing an uncontrolled influx of ions (i.e. calcium and sodium), and eventually triggering irreversible intracellular alterations and cell death. This chain is Basic phospholipase A2 homolog W6D49, found in Calloselasma rhodostoma (Malayan pit viper).